Reading from the N-terminus, the 136-residue chain is MLSPKKQKYRKAQKGRVASKAKAGTMIAFGEFGLKSLDSCRITSRQIEAARRAAVRCMKRQGKFWINIFPSIPVSKKPTEVRMGKGKGATEFFAARVAVGRILFELDGVSEGIAIKALELAGAKLPVRTKIVKRYE.

This sequence belongs to the universal ribosomal protein uL16 family. Part of the 50S ribosomal subunit.

Functionally, binds 23S rRNA and is also seen to make contacts with the A and possibly P site tRNAs. The sequence is that of Large ribosomal subunit protein uL16 from Orientia tsutsugamushi (strain Ikeda) (Rickettsia tsutsugamushi).